Consider the following 277-residue polypeptide: Large ribosomal subunit protein uL2 (277 aa).

Disordered stretches follow at residues 34–55 and 213–277; these read LQPL…RHHG and WKGI…RKKK.

The protein belongs to the universal ribosomal protein uL2 family. As to quaternary structure, part of the 50S ribosomal subunit. Forms a bridge to the 30S subunit in the 70S ribosome.

One of the primary rRNA binding proteins. Required for association of the 30S and 50S subunits to form the 70S ribosome, for tRNA binding and peptide bond formation. It has been suggested to have peptidyltransferase activity; this is somewhat controversial. Makes several contacts with the 16S rRNA in the 70S ribosome. The sequence is that of Large ribosomal subunit protein uL2 from Staphylococcus haemolyticus (strain JCSC1435).